The sequence spans 368 residues: UDP-N-acetylglucosamine--N-acetylmuramyl-(pentapeptide) pyrophosphoryl-undecaprenol N-acetylglucosamine transferase (368 aa).

UDP-N-acetyl-alpha-D-glucosamine-binding positions include 10–12 (TGG), Asn-128, Arg-170, Ser-199, Ile-250, and Gln-295.

It belongs to the glycosyltransferase 28 family. MurG subfamily.

Its subcellular location is the cell inner membrane. The enzyme catalyses di-trans,octa-cis-undecaprenyl diphospho-N-acetyl-alpha-D-muramoyl-L-alanyl-D-glutamyl-meso-2,6-diaminopimeloyl-D-alanyl-D-alanine + UDP-N-acetyl-alpha-D-glucosamine = di-trans,octa-cis-undecaprenyl diphospho-[N-acetyl-alpha-D-glucosaminyl-(1-&gt;4)]-N-acetyl-alpha-D-muramoyl-L-alanyl-D-glutamyl-meso-2,6-diaminopimeloyl-D-alanyl-D-alanine + UDP + H(+). It participates in cell wall biogenesis; peptidoglycan biosynthesis. Cell wall formation. Catalyzes the transfer of a GlcNAc subunit on undecaprenyl-pyrophosphoryl-MurNAc-pentapeptide (lipid intermediate I) to form undecaprenyl-pyrophosphoryl-MurNAc-(pentapeptide)GlcNAc (lipid intermediate II). The sequence is that of UDP-N-acetylglucosamine--N-acetylmuramyl-(pentapeptide) pyrophosphoryl-undecaprenol N-acetylglucosamine transferase from Chlorobium phaeovibrioides (strain DSM 265 / 1930) (Prosthecochloris vibrioformis (strain DSM 265)).